The chain runs to 635 residues: CCR4-NOT transcription complex subunit 10 (635 aa).

Residue threonine 45 is modified to Phosphothreonine. Positions leucine 131 to alanine 165 form a coiled coil. Disordered regions lie at residues glutamate 396 to glycine 416 and serine 450 to phenylalanine 474. Positions proline 456 to glutamine 470 are enriched in basic and acidic residues.

This sequence belongs to the CNOT10 family. In terms of assembly, component of the CCR4-NOT complex. CNOT10 and CNOT11 form a subcomplex docked to the CNOT1 scaffold.

It localises to the cytoplasm. The protein localises to the nucleus. Functionally, component of the CCR4-NOT complex which is one of the major cellular mRNA deadenylases and is linked to various cellular processes including bulk mRNA degradation, miRNA-mediated repression, translational repression during translational initiation and general transcription regulation. Additional complex functions may be a consequence of its influence on mRNA expression. Is not required for association of CNOT7 to the CCR4-NOT complex. This chain is CCR4-NOT transcription complex subunit 10 (Not10), found in Drosophila melanogaster (Fruit fly).